The primary structure comprises 589 residues: MAERTHACGRVTVEAIGQTVQLKGWVQKRRDLGGLIFIDLRDRTGIVQVVFSPETSKEALEVAETIRGEYVLHVEGTVVARGAGAINENMATGQIEVQATKVTVLNAAKTTPIIIADDTDASEDVRLKYRYLDLRRPVMYNTFKMRHDVTKTIRNFLDTEEFLEVETPILTKSTPEGARDYLVPSRVHDGEFYALPQSPQLFKQLLMVGGFERYYQVARCFRDEDLRADRQPEFTQIDIEASFLTQEEILDMMERMMTKVMKDVKGVEISVPFPRMTYADAMARYGSDKPDTRFEMELTDLSEFAAGCGFKVFTGAVENGGQVKAINAKGAASKYSRKDIDALTEFVKVYGAKGLAWLKVEEDGLKGPIAKFFNEEEANVIMTTLEASAGDLLLFVADKKSVVADSLGALRLRLGKELELIDENKFNFLWVTDWPLLEYDEEANRYFAAHHPFTMPFREDVELLETAPEKARAQAYDLVLNGYELGGGSLRIYERDVQEKMFKALGFTQEEAREQFGFLLEAFEYGTPPHGGIALGLDRLVMLLAGRTNLRDTIAFPKTASASCLLTDAPSPVAGAQLEELHLKLNVKE.

Residue Glu-176 participates in L-aspartate binding. Positions 200 to 203 (QLFK) are aspartate. L-aspartate is bound at residue Arg-222. Residues 222–224 (RDE) and Gln-231 each bind ATP. Residue His-450 coordinates L-aspartate. Glu-484 lines the ATP pocket. Arg-491 is a binding site for L-aspartate. 536-539 (GLDR) is an ATP binding site.

This sequence belongs to the class-II aminoacyl-tRNA synthetase family. Type 1 subfamily. Homodimer.

The protein resides in the cytoplasm. The catalysed reaction is tRNA(Asx) + L-aspartate + ATP = L-aspartyl-tRNA(Asx) + AMP + diphosphate. Its function is as follows. Aspartyl-tRNA synthetase with relaxed tRNA specificity since it is able to aspartylate not only its cognate tRNA(Asp) but also tRNA(Asn). Reaction proceeds in two steps: L-aspartate is first activated by ATP to form Asp-AMP and then transferred to the acceptor end of tRNA(Asp/Asn). In Bacillus cytotoxicus (strain DSM 22905 / CIP 110041 / 391-98 / NVH 391-98), this protein is Aspartate--tRNA(Asp/Asn) ligase.